We begin with the raw amino-acid sequence, 180 residues long: MNTRLEKFYKENVVPALMKEFGYTNPMEVPKLVKVTLNMGVGEAASNKKILENAVADMSKISGQKPVVTKSRVSVASFKIRDGWPIGCKTTLRRAKMYEFLDRLINISLPRVRDFRGVSGRSFDGRGNFNMGVKEQIIFPEIDFDAVDAIRGMDIAVTTTAKTDAEAKALLAAFKFPFRN.

The protein belongs to the universal ribosomal protein uL5 family. Part of the 50S ribosomal subunit; part of the 5S rRNA/L5/L18/L25 subcomplex. Contacts the 5S rRNA and the P site tRNA. Forms a bridge to the 30S subunit in the 70S ribosome.

Functionally, this is one of the proteins that bind and probably mediate the attachment of the 5S RNA into the large ribosomal subunit, where it forms part of the central protuberance. In the 70S ribosome it contacts protein S13 of the 30S subunit (bridge B1b), connecting the 2 subunits; this bridge is implicated in subunit movement. Contacts the P site tRNA; the 5S rRNA and some of its associated proteins might help stabilize positioning of ribosome-bound tRNAs. This is Large ribosomal subunit protein uL5 from Xanthomonas oryzae pv. oryzae (strain MAFF 311018).